Reading from the N-terminus, the 222-residue chain is Phosphoenolpyruvate guanylyltransferase (222 aa).

Positions 134, 150, and 153 each coordinate phosphoenolpyruvate.

The protein belongs to the CofC family.

The catalysed reaction is phosphoenolpyruvate + GTP + H(+) = enolpyruvoyl-2-diphospho-5'-guanosine + diphosphate. It participates in cofactor biosynthesis; coenzyme F420 biosynthesis. Guanylyltransferase that catalyzes the activation of phosphoenolpyruvate (PEP) as enolpyruvoyl-2-diphospho-5'-guanosine, via the condensation of PEP with GTP. It is involved in the biosynthesis of coenzyme F420, a hydride carrier cofactor. The polypeptide is Phosphoenolpyruvate guanylyltransferase (Roseiflexus sp. (strain RS-1)).